The following is a 257-amino-acid chain: Type III pantothenate kinase (257 aa).

Residue 11-18 (DSGNTAIK) participates in ATP binding. Residues tyrosine 96 and 103–106 (GCDR) each bind substrate. Aspartate 105 acts as the Proton acceptor in catalysis. Aspartate 125 lines the K(+) pocket. Threonine 128 contacts ATP. A substrate-binding site is contributed by threonine 179.

Belongs to the type III pantothenate kinase family. As to quaternary structure, homodimer. The cofactor is NH4(+). K(+) is required as a cofactor.

It is found in the cytoplasm. The catalysed reaction is (R)-pantothenate + ATP = (R)-4'-phosphopantothenate + ADP + H(+). Its pathway is cofactor biosynthesis; coenzyme A biosynthesis; CoA from (R)-pantothenate: step 1/5. Functionally, catalyzes the phosphorylation of pantothenate (Pan), the first step in CoA biosynthesis. This chain is Type III pantothenate kinase, found in Nitrosomonas eutropha (strain DSM 101675 / C91 / Nm57).